A 323-amino-acid polypeptide reads, in one-letter code: Putative HTH-type transcriptional regulatory protein Mbur_1811 (323 aa).

The region spanning 132–190 is the HTH cro/C1-type domain; that stretch reads LKEARMNVSMSLGALASELGVSRRTISKYEEGQMDASIDIVLHLEEILDMALAKSIDIL. Residues 143 to 162 constitute a DNA-binding region (H-T-H motif); the sequence is LGALASELGVSRRTISKYEE.

This is Putative HTH-type transcriptional regulatory protein Mbur_1811 from Methanococcoides burtonii (strain DSM 6242 / NBRC 107633 / OCM 468 / ACE-M).